The primary structure comprises 325 residues: Melanocortin receptor 5 (325 aa).

Residues 1–37 (MNSSFHLHFLDLNLNATEGNLSGPNVKNKSSPCEDMG) lie on the Extracellular side of the membrane. N-linked (GlcNAc...) asparagine glycans are attached at residues asparagine 2, asparagine 15, asparagine 20, and asparagine 28. The chain crosses the membrane as a helical span at residues 38–61 (IAVEVFLTLGVISLLENILVIGAI). Residues 62–73 (VKNKNLHSPMYF) are Cytoplasmic-facing. A helical transmembrane segment spans residues 74 to 97 (FVCSLAVADMLVSMSSAWETITIY). The Extracellular portion of the chain corresponds to 98–114 (LLNNKHLVIADAFVRHI). A helical transmembrane segment spans residues 115-138 (DNVFDSMICISVVASMCSLLAIAV). Topologically, residues 139–155 (DRYVTIFYALRYHHIMT) are cytoplasmic. A helical membrane pass occupies residues 156 to 179 (ARRSGAIIAGIWAFCTGCGIVFIL). Residues 180–186 (YSESTYV) lie on the Extracellular side of the membrane. Residues 187–211 (ILCLISMFFAMLFLLVSLYIHMFLL) form a helical membrane-spanning segment. The Cytoplasmic segment spans residues 212–239 (ARTHVKRIAALPGASSARQRTSMQGAVT). Residues 240-265 (VTMLLGVFTVCWAPFFLHLTLMLSCP) form a helical membrane-spanning segment. The Extracellular segment spans residues 266-273 (QNLYCSRF). The helical transmembrane segment at 274–297 (MSHFNMYLILIMCNSVMDPLIYAF) threads the bilayer. The Cytoplasmic portion of the chain corresponds to 298 to 325 (RSQEMRKTFKEIICCRGFRIACSFPRRD). 2 S-palmitoyl cysteine lipidation sites follow: cysteine 311 and cysteine 312.

The protein belongs to the G-protein coupled receptor 1 family. Expressed in the brain but not in the melanoma cells.

It is found in the cell membrane. Receptor for MSH (alpha, beta and gamma) and ACTH. The activity of this receptor is mediated by G proteins which activate adenylate cyclase. This receptor is a possible mediator of the immunomodulation properties of melanocortins. This chain is Melanocortin receptor 5 (MC5R), found in Homo sapiens (Human).